The primary structure comprises 148 residues: Histone H2A-like 3 (148 aa).

The interval 101-128 (DDTHSQVEEMPQSEEEEEEEEEKEEEMV) is disordered. The span at 111 to 127 (PQSEEEEEEEEEKEEEM) shows a compositional bias: acidic residues.

This sequence belongs to the histone H2A family. The nucleosome is a histone octamer containing two molecules each of H2A, H2B, H3 and H4 assembled in one H3-H4 heterotetramer and two H2A-H2B heterodimers. The octamer wraps approximately 147 bp of DNA.

The protein resides in the nucleus. It is found in the chromosome. Functionally, core component of nucleosome. Nucleosomes wrap and compact DNA into chromatin, limiting DNA accessibility to the cellular machineries which require DNA as a template. Histones thereby play a central role in transcription regulation, DNA repair, DNA replication and chromosomal stability. DNA accessibility is regulated via a complex set of post-translational modifications of histones, also called histone code, and nucleosome remodeling. This chain is Histone H2A-like 3, found in Homo sapiens (Human).